The following is a 556-amino-acid chain: Phenylalanine--tRNA ligase beta subunit (556 aa).

In terms of domain architecture, B5 spans 278–354; that stretch reads LTPKEFEVSF…IAYGYNNIDP (77 aa). Mg(2+) contacts are provided by Asp-332, Asp-338, Glu-341, and Asp-342.

It belongs to the phenylalanyl-tRNA synthetase beta subunit family. Type 2 subfamily. Tetramer of two alpha and two beta subunits. Requires Mg(2+) as cofactor.

The protein localises to the cytoplasm. The catalysed reaction is tRNA(Phe) + L-phenylalanine + ATP = L-phenylalanyl-tRNA(Phe) + AMP + diphosphate + H(+). The sequence is that of Phenylalanine--tRNA ligase beta subunit from Pyrococcus furiosus (strain ATCC 43587 / DSM 3638 / JCM 8422 / Vc1).